The following is a 127-amino-acid chain: Protein LLP homolog (127 aa).

Over residues 1–21 the composition is skewed to basic residues; that stretch reads MAKSLRSKWKRKMRAEKRKKN. The disordered stretch occupies residues 1 to 24; sequence MAKSLRSKWKRKMRAEKRKKNAPK. Residues Lys65 and Lys72 each participate in a glycyl lysine isopeptide (Lys-Gly) (interchain with G-Cter in SUMO2) cross-link. Residues 98-120 show a composition bias toward basic residues; that stretch reads RQRKRLKAKRERKKGKSKVKAMK. Residues 98 to 127 are disordered; that stretch reads RQRKRLKAKRERKKGKSKVKAMKAAKGLTW.

The protein belongs to the learning-associated protein family. Interacts with CTCF, MYO1C and with the transcriptional machinery, including RNA polymerase II and TBP.

The protein localises to the nucleus. It localises to the nucleolus. It is found in the chromosome. In hippocampal neurons, regulates dendritic and spine growth and synaptic transmission. The chain is Protein LLP homolog (LLPH) from Bos taurus (Bovine).